We begin with the raw amino-acid sequence, 68 residues long: Putative membrane protein insertion efficiency factor (68 aa).

Belongs to the UPF0161 family.

It localises to the cell inner membrane. Its function is as follows. Could be involved in insertion of integral membrane proteins into the membrane. This is Putative membrane protein insertion efficiency factor from Persephonella marina (strain DSM 14350 / EX-H1).